A 333-amino-acid polypeptide reads, in one-letter code: Phosphate acyltransferase (333 aa).

Belongs to the PlsX family. As to quaternary structure, homodimer. Probably interacts with PlsY.

It localises to the cytoplasm. The enzyme catalyses a fatty acyl-[ACP] + phosphate = an acyl phosphate + holo-[ACP]. It functions in the pathway lipid metabolism; phospholipid metabolism. Functionally, catalyzes the reversible formation of acyl-phosphate (acyl-PO(4)) from acyl-[acyl-carrier-protein] (acyl-ACP). This enzyme utilizes acyl-ACP as fatty acyl donor, but not acyl-CoA. This is Phosphate acyltransferase from Lactobacillus gasseri (strain ATCC 33323 / DSM 20243 / BCRC 14619 / CIP 102991 / JCM 1131 / KCTC 3163 / NCIMB 11718 / NCTC 13722 / AM63).